We begin with the raw amino-acid sequence, 320 residues long: Cytochrome c biogenesis protein CcsA (320 aa).

The next 7 helical transmembrane spans lie at 14-34 (VLLLGLAAFALLLTALPWCFW), 68-88 (GHFPISNLYESLCFLAWACTL), 101-121 (LVAASATPMGLGCIAFASFAL), 146-166 (VIMVSYAALLVGSLLSVAVLM), 226-246 (TITVGFLLLTVGIISGAVWAN), 260-277 (TWALICWLVYAAYLHTRL), and 289-309 (VASLGLVVIVVCYIGVNLLGI).

This sequence belongs to the CcmF/CycK/Ccl1/NrfE/CcsA family. In terms of assembly, may interact with ccs1.

It is found in the cellular thylakoid membrane. Its function is as follows. Required during biogenesis of c-type cytochromes (cytochrome c6 and cytochrome f) at the step of heme attachment. In Synechococcus sp. (strain WH7803), this protein is Cytochrome c biogenesis protein CcsA.